A 1040-amino-acid polypeptide reads, in one-letter code: Multidrug resistance protein MdtB (1040 aa).

A run of 12 helical transmembrane segments spans residues 16–36 (FIMR…AGII), 347–367 (LMMA…NIPA), 369–389 (IIPG…MVFL), 396–416 (LTLM…IVVI), 440–460 (IGFT…PLLF), 472–492 (FAIT…TLTP), 537–557 (WLTL…WVFI), 863–883 (LGST…VLGI), 888–908 (FIHP…ALLA), 911–931 (IAGS…IGIV), 968–988 (ILMT…STGV), and 998–1018 (IGMV…TPVI).

This sequence belongs to the resistance-nodulation-cell division (RND) (TC 2.A.6) family. MdtB subfamily. Part of a tripartite efflux system composed of MdtA, MdtB and MdtC. MdtB forms a heteromultimer with MdtC.

Its subcellular location is the cell inner membrane. In terms of biological role, the MdtABC tripartite complex confers resistance against novobiocin and deoxycholate. This is Multidrug resistance protein MdtB from Escherichia coli O157:H7 (strain EC4115 / EHEC).